We begin with the raw amino-acid sequence, 186 residues long: UPF0301 protein Daro_3893 (186 aa).

This sequence belongs to the UPF0301 (AlgH) family.

The protein is UPF0301 protein Daro_3893 of Dechloromonas aromatica (strain RCB).